Here is a 179-residue protein sequence, read N- to C-terminus: Ubiquitin-conjugating enzyme E2 C (179 aa).

Ala2 is subject to N-acetylalanine. Ser3 is modified (phosphoserine). Residues 30 to 175 (PVGKRLQQEL…LQETYSKQVS (146 aa)) enclose the UBC core domain. Cys114 functions as the Glycyl thioester intermediate in the catalytic mechanism.

It belongs to the ubiquitin-conjugating enzyme family. Component of the APC/C complex, composed of at least 14 distinct subunits that assemble into a complex of at least 19 chains with a combined molecular mass of around 1.2 MDa. Within this complex, directly interacts with ANAPC2. Post-translationally, autoubiquitinated by the APC/C complex, leading to its degradation by the proteasome. Its degradation plays a central role in APC/C regulation, allowing cyclin-A accumulation before S phase entry. APC/C substrates inhibit the autoubiquitination of UBE2C/UBCH10 but not its E2 function, hence APC/C remaining active until its substrates have been destroyed.

It carries out the reaction S-ubiquitinyl-[E1 ubiquitin-activating enzyme]-L-cysteine + [E2 ubiquitin-conjugating enzyme]-L-cysteine = [E1 ubiquitin-activating enzyme]-L-cysteine + S-ubiquitinyl-[E2 ubiquitin-conjugating enzyme]-L-cysteine.. It catalyses the reaction S-ubiquitinyl-[E1 ubiquitin-activating enzyme]-L-cysteine + [acceptor protein]-L-lysine = [E1 ubiquitin-activating enzyme]-L-cysteine + N(6)-monoubiquitinyl-[acceptor protein]-L-lysine.. It participates in protein modification; protein ubiquitination. In terms of biological role, accepts ubiquitin from the E1 complex and catalyzes its covalent attachment to other proteins. In vitro catalyzes 'Lys-11'- and 'Lys-48'-linked polyubiquitination. Acts as an essential factor of the anaphase promoting complex/cyclosome (APC/C), a cell cycle-regulated ubiquitin ligase that controls progression through mitosis. Acts by initiating 'Lys-11'-linked polyubiquitin chains on APC/C substrates, leading to the degradation of APC/C substrates by the proteasome and promoting mitotic exit. The polypeptide is Ubiquitin-conjugating enzyme E2 C (Ube2c) (Mus musculus (Mouse)).